The chain runs to 307 residues: MKSLKQQKIAVLLGGTASEREVSLNSGAAVLDALRSQGYDAHPVDPKDMPVADLKQQGFERVFNILHGRGGEDGVIQGVLEQIGLPYTGCGVMTSALTMDKMRTKMLWKGFGLPIADMEIVTKNTALSLEPQAIVARLGLPLMVKPSREGSSVGLTKVDSADKLKSAVDLALKFDDIVLIEEWLSGDELTVPVLGDEVLPAVQIVPEGEFYDYNAKYISDNTRYICPMPMSDERWDELKNLVKRAYEAVGCRGWSRIDVMTDSEGNFRLIEVNTTPGMTSHSLFPKSAATVGYSFEKLVEKILELSV.

An ATP-grasp domain is found at 105–304 (KMLWKGFGLP…FEKLVEKILE (200 aa)). 135–190 (VARLGLPLMVKPSREGSSVGLTKVDSADKLKSAVDLALKFDDIVLIEEWLSGDELT) serves as a coordination point for ATP. Mg(2+)-binding residues include D258, E271, and N273.

This sequence belongs to the D-alanine--D-alanine ligase family. Requires Mg(2+) as cofactor. It depends on Mn(2+) as a cofactor.

The protein resides in the cytoplasm. It catalyses the reaction 2 D-alanine + ATP = D-alanyl-D-alanine + ADP + phosphate + H(+). Its pathway is cell wall biogenesis; peptidoglycan biosynthesis. Functionally, cell wall formation. The polypeptide is D-alanine--D-alanine ligase (Actinobacillus succinogenes (strain ATCC 55618 / DSM 22257 / CCUG 43843 / 130Z)).